A 141-amino-acid polypeptide reads, in one-letter code: Large ribosomal subunit protein uL11 (141 aa).

It belongs to the universal ribosomal protein uL11 family. In terms of assembly, part of the ribosomal stalk of the 50S ribosomal subunit. Interacts with L10 and the large rRNA to form the base of the stalk. L10 forms an elongated spine to which L12 dimers bind in a sequential fashion forming a multimeric L10(L12)X complex. Post-translationally, one or more lysine residues are methylated.

Functionally, forms part of the ribosomal stalk which helps the ribosome interact with GTP-bound translation factors. In Chlamydia felis (strain Fe/C-56) (Chlamydophila felis), this protein is Large ribosomal subunit protein uL11.